The chain runs to 570 residues: Periplasmic trehalase (570 aa).

Positions 1 to 34 (MIPPEIRRSVLLQKAIKLALAGTLLTFASFSATA) are cleaved as a signal peptide. Substrate is bound by residues Arg-159, 166 to 167 (WD), Asn-203, 212 to 214 (RSQ), 284 to 286 (RPE), and Gly-317. Catalysis depends on proton donor/acceptor residues Asp-319 and Glu-503. Glu-518 contacts substrate. A disordered region spans residues 544-570 (KPCDSVPSTRPASLSATPTKTPSAATQ). Residues 554 to 570 (PASLSATPTKTPSAATQ) show a composition bias toward low complexity.

The protein belongs to the glycosyl hydrolase 37 family. In terms of assembly, monomer.

Its subcellular location is the periplasm. It carries out the reaction alpha,alpha-trehalose + H2O = alpha-D-glucose + beta-D-glucose. In terms of biological role, provides the cells with the ability to utilize trehalose at high osmolarity by splitting it into glucose molecules that can subsequently be taken up by the phosphotransferase-mediated uptake system. The sequence is that of Periplasmic trehalase from Salmonella paratyphi B (strain ATCC BAA-1250 / SPB7).